The chain runs to 593 residues: Maternal uncoordinated protein 2 (593 aa).

This sequence belongs to the SCC4/mau-2 family. As to quaternary structure, may heterodimerize with scc-2/SCC2 to form the cohesin loading complex.

It is found in the nucleus. Its subcellular location is the nucleoplasm. The protein localises to the cytoplasm. Its function is as follows. Plays an important role in the loading of the cohesin complex on to DNA. Forms a heterodimeric complex (also known as cohesin loading complex) with scc-2/SCC2 which mediates the loading of the cohesin complex onto chromatin. Required for normal development until the fourth larval stage. Functions cell autonomously to guide migrations during the development of the nervous system. Participates in the guidance of mechanosensory neuron AVM by a slt-1-independent mechanism. Regulates chromosome segregation in early embryos. In Caenorhabditis elegans, this protein is Maternal uncoordinated protein 2.